Reading from the N-terminus, the 345-residue chain is Heat stress transcription factor A-4c (345 aa).

The DNA-binding element occupies 11–105 (LPPFLTKTYE…LMKNIHRRKP (95 aa)). The segment at 119-185 (PLTESERRSM…SIVAYVSQVL (67 aa)) is hydrophobic repeat HR-A/B. Residues 199–203 (RRKRR) carry the Nuclear localization signal motif. Residues 226–235 (LTFWENLVSE) carry the AHA1 motif. The segment at 240-329 (SGLQSSSMDH…NGNKIGNQRT (90 aa)) is disordered. Residues 274 to 283 (PPVTVTAPAP) show a composition bias toward low complexity. Residues 289-298 (DDFWEQCLTE) carry the AHA2 motif. Polar residues-rich tracts occupy residues 296–308 (LTEN…QQEV) and 317–329 (NDNN…NQRT).

It belongs to the HSF family. Class A subfamily. As to quaternary structure, homotrimer. Post-translationally, exhibits temperature-dependent phosphorylation. In terms of tissue distribution, expressed in roots, seedlings and at lower levels in leaves.

The protein resides in the nucleus. Transcriptional activator that specifically binds DNA sequence 5'-AGAAnnTTCT-3' known as heat shock promoter elements (HSE). May be involved in general response to auxin. The sequence is that of Heat stress transcription factor A-4c (HSFA4C) from Arabidopsis thaliana (Mouse-ear cress).